Here is a 150-residue protein sequence, read N- to C-terminus: Ribonuclease HI (150 aa).

The RNase H type-1 domain maps to 1–141 (MKSINAYTDG…VDVLARGQAM (141 aa)). Residues aspartate 9, glutamate 47, aspartate 69, and aspartate 133 each contribute to the Mg(2+) site.

Belongs to the RNase H family. Monomer. Requires Mg(2+) as cofactor.

It is found in the cytoplasm. It catalyses the reaction Endonucleolytic cleavage to 5'-phosphomonoester.. Its function is as follows. Endonuclease that specifically degrades the RNA of RNA-DNA hybrids. The chain is Ribonuclease HI from Xylella fastidiosa (strain 9a5c).